A 583-amino-acid chain; its full sequence is Leucine-rich repeat-containing protein 47 (583 aa).

Position 2 is an N-acetylalanine (Ala-2). 7 LRR repeats span residues 76 to 95, 100 to 121, 130 to 152, 154 to 175, 180 to 202, 203 to 225, and 226 to 246; these read QLHS…SPEL, ALRV…QGLG, QLQS…ARCA, RLQS…LFRP, LLSE…AHLA, SLKT…ADCP, and KLKE…EKMV. Residues 260–300 form a disordered region; it reads VGGRGGGKGKGRAEGSEKEESRRKRRERKQRREGGDGEEQD. The segment covering 270 to 281 has biased composition (basic and acidic residues); it reads GRAEGSEKEESR. Phosphoserine is present on residues Ser-315 and Ser-431. A coiled-coil region spans residues 402 to 437; the sequence is LGRKEAKAKELVRQLQLEAEEQRKQKKRQSVSGLHR. Tyr-509 is subject to Phosphotyrosine. A disordered region spans residues 513–544; that stretch reads NKEEGSLSDTEADAVSGQLPDPTTNPSAGKDG. Residues Ser-518 and Ser-520 each carry the phosphoserine modification.

The polypeptide is Leucine-rich repeat-containing protein 47 (LRRC47) (Homo sapiens (Human)).